A 216-amino-acid polypeptide reads, in one-letter code: Putative holocytochrome-c1 synthase (216 aa).

Residues 1–46 are disordered; the sequence is MQPEQLNQEEESKCPVPPEVRDAWLKSHGGKKPSEVHDTPHPTMLP.

The protein belongs to the cytochrome c-type heme lyase family.

The protein resides in the mitochondrion inner membrane. The enzyme catalyses holo-[cytochrome c] = apo-[cytochrome c] + heme b. Functionally, lyase that catalyzes the covalent linking of the heme group to the cytochrome C1 apoprotein to produce the mature functional cytochrome. This chain is Putative holocytochrome-c1 synthase, found in Schizosaccharomyces pombe (strain 972 / ATCC 24843) (Fission yeast).